The chain runs to 406 residues: Peptidase T (406 aa).

Histidine 81 lines the Zn(2+) pocket. Aspartate 83 is a catalytic residue. Aspartate 142 is a binding site for Zn(2+). The active-site Proton acceptor is the glutamate 176. Zn(2+) is bound by residues glutamate 177, aspartate 199, and histidine 381.

It belongs to the peptidase M20B family. Requires Zn(2+) as cofactor.

The protein resides in the cytoplasm. The catalysed reaction is Release of the N-terminal residue from a tripeptide.. Cleaves the N-terminal amino acid of tripeptides. This is Peptidase T from Streptococcus pneumoniae serotype 2 (strain D39 / NCTC 7466).